A 253-amino-acid chain; its full sequence is POU Class 2 homeobox-associating factor 3 (253 aa).

The 23-residue stretch at Pro-5–His-27 folds into the OCA domain.

This sequence belongs to the POU2AF family. Interacts with POU2F3 in a DNA-dependent manner; this interaction increases POU2F3 transactivation activity. In terms of tissue distribution, expressed in tuft cells.

The protein localises to the cytoplasm. Its subcellular location is the nucleus. Its function is as follows. Transcriptional coactivator that specifically associates with POU2F3. This complex drives the development of tuft cells, a rare a rare chemosensory cells that coordinate immune and neural functions within mucosal epithelial tissues. The sequence is that of POU Class 2 homeobox-associating factor 3 from Mus musculus (Mouse).